Consider the following 679-residue polypeptide: Glycine--tRNA ligase beta subunit (679 aa).

This sequence belongs to the class-II aminoacyl-tRNA synthetase family. As to quaternary structure, tetramer of two alpha and two beta subunits.

The protein localises to the cytoplasm. It carries out the reaction tRNA(Gly) + glycine + ATP = glycyl-tRNA(Gly) + AMP + diphosphate. This is Glycine--tRNA ligase beta subunit from Streptococcus pyogenes serotype M4 (strain MGAS10750).